The chain runs to 266 residues: Phosphate import ATP-binding protein PstB 1 (266 aa).

The ABC transporter domain maps to 21 to 261 (ISTQDLSVFY…PKGEITEDYI (241 aa)). Residue 54–61 (GGSGSGKS) participates in ATP binding.

The protein belongs to the ABC transporter superfamily. Phosphate importer (TC 3.A.1.7) family. As to quaternary structure, the complex is composed of two ATP-binding proteins (PstB), two transmembrane proteins (PstC and PstA) and a solute-binding protein (PstS).

It is found in the cell membrane. The catalysed reaction is phosphate(out) + ATP + H2O = ADP + 2 phosphate(in) + H(+). Its function is as follows. Part of the ABC transporter complex PstSACB involved in phosphate import. Responsible for energy coupling to the transport system. This is Phosphate import ATP-binding protein PstB 1 from Lactobacillus johnsonii (strain CNCM I-12250 / La1 / NCC 533).